The following is a 430-amino-acid chain: MNNKIKPSILPGFMELLPKEQLVFNDIVSKITGVYEQNGFLPMDTPIIEKEEVLLAKSAGETEKQVYRIDNEDRKQVLRFDLTVPFSRFAAQYMSDLTFPFKRYQLGKVYRGERNQKGRYREFYQCDVDVVGNGNLSIKNDAFIINMASKALRKIGLDSYKFQISNRKILTGVLEGLNITNMQEVMILIDKYDKITEEQFLSELNKLIGEEKAKVISKVIKISGSSDEVVENLKKVEIKNEMLEKGIEEVEEVIKYLKLFGVEDSEYAINLKIIRGLDYYTGTVFETLLTGNESYGSICSGGRYDNLAQNYTENVLPGVGMSIGITRLFFVLREIGFIENYNSSLNEKYLIVPIGDTFEYCTKILNKLLVNGKSAEIYFEEGKLKKKLTYANKLDIKYVILIGEDEVTNKELVIKDMITGEQKKLNIEEI.

It belongs to the class-II aminoacyl-tRNA synthetase family. In terms of assembly, homodimer.

The protein localises to the cytoplasm. The enzyme catalyses tRNA(His) + L-histidine + ATP = L-histidyl-tRNA(His) + AMP + diphosphate + H(+). In Clostridium acetobutylicum (strain ATCC 824 / DSM 792 / JCM 1419 / IAM 19013 / LMG 5710 / NBRC 13948 / NRRL B-527 / VKM B-1787 / 2291 / W), this protein is Histidine--tRNA ligase (hisS).